Consider the following 385-residue polypeptide: Multidrug resistance protein MdtE (385 aa).

The N-terminal stretch at 1–20 (MNRRRKLLIPLLFCGAMLTA) is a signal peptide. Residue cysteine 21 is the site of N-palmitoyl cysteine attachment. A lipid anchor (S-diacylglycerol cysteine) is attached at cysteine 21.

It belongs to the membrane fusion protein (MFP) (TC 8.A.1) family. As to quaternary structure, homotrimer. Part of the tripartite efflux system MdtEF-TolC, which is composed of an inner membrane transporter, MdtF, a membrane fusion protein, MdtE, and an outer membrane component, TolC. The complex forms a large protein conduit and can translocate molecules across both the inner and outer membranes.

It localises to the cell inner membrane. Part of the tripartite efflux system MdtEF-TolC, which confers resistance to various compounds. In Escherichia coli O157:H7, this protein is Multidrug resistance protein MdtE (mdtE).